The primary structure comprises 1075 residues: Paired amphipathic helix protein pst2 (1075 aa).

3 PAH domains span residues 28–102, 138–208, and 243–319; these read SPNG…LPSS, LPCT…LPSS, and RPDN…TSLS. Phosphoserine occurs at positions 641 and 643. The interval 647–700 is disordered; the sequence is LTEFVKQPKINGQRESRSAAAARKKEESGNKSQSNSQNSLSDESGNVTPVSKKQ. Residues 658–675 are compositionally biased toward basic and acidic residues; it reads GQRESRSAAAARKKEESG. Residues 676 to 691 are compositionally biased toward low complexity; it reads NKSQSNSQNSLSDESG.

As to quaternary structure, heterotetramer of alp13, clr6, prw1 and pst2.

It is found in the nucleus. In terms of biological role, has a role in chromatin assembly and chromosome segregation. Involved in the deacetylation of histones. The chain is Paired amphipathic helix protein pst2 (pst2) from Schizosaccharomyces pombe (strain 972 / ATCC 24843) (Fission yeast).